A 392-amino-acid polypeptide reads, in one-letter code: MTLLGTALRPAATRVMLLGAGELGKEVAIECQRLGIEVIAVDRYPDAPAMHVAHRSHVINMLDGEALRHVITEEKPHYIVPEIEAIATDTLRELEGEGLNVVPCARATQLTMNREGIRRLAAEELGLPTSTYRFADSEASFHDAVAAVGFPCIVKPVMSSSGKGQSFIRSAEQLAQAWEYAQQGGRAGAGRVIVEGVVKFDFEITLLTVSAVDGVHFCAPVGHRQQDGDYRESWQPQQMSELALKRAQEIARHVVLALGGHGLFGVELFVCGDEVIFSEVSPRPHDTGMVTLISQDLSEFALHVRAFLGMPIGAIRQYGPAASAVILPQLTSQNVTFDDVHAAVGAGVQVRLFGKPEIDGTRRLGVALATGENVEEAVIRAKKAASRVTVKG.

Residues 22–23 (EL) and Glu-82 contribute to the N(1)-(5-phospho-beta-D-ribosyl)glycinamide site. Residues Arg-114, Lys-155, 160–165 (SSGKGQ), 195–198 (EGVV), and Glu-203 each bind ATP. In terms of domain architecture, ATP-grasp spans 119 to 308 (RLAAEELGLP…EFALHVRAFL (190 aa)). Positions 267 and 279 each coordinate Mg(2+). N(1)-(5-phospho-beta-D-ribosyl)glycinamide contacts are provided by residues Asp-286, Lys-355, and 362–363 (RR).

Belongs to the PurK/PurT family. Homodimer.

It catalyses the reaction N(1)-(5-phospho-beta-D-ribosyl)glycinamide + formate + ATP = N(2)-formyl-N(1)-(5-phospho-beta-D-ribosyl)glycinamide + ADP + phosphate + H(+). It participates in purine metabolism; IMP biosynthesis via de novo pathway; N(2)-formyl-N(1)-(5-phospho-D-ribosyl)glycinamide from N(1)-(5-phospho-D-ribosyl)glycinamide (formate route): step 1/1. Involved in the de novo purine biosynthesis. Catalyzes the transfer of formate to 5-phospho-ribosyl-glycinamide (GAR), producing 5-phospho-ribosyl-N-formylglycinamide (FGAR). Formate is provided by PurU via hydrolysis of 10-formyl-tetrahydrofolate. The sequence is that of Formate-dependent phosphoribosylglycinamide formyltransferase from Salmonella paratyphi A (strain ATCC 9150 / SARB42).